Consider the following 302-residue polypeptide: Recombination-associated protein RdgC (302 aa).

This sequence belongs to the RdgC family.

It is found in the cytoplasm. The protein resides in the nucleoid. Its function is as follows. May be involved in recombination. This is Recombination-associated protein RdgC from Actinobacillus pleuropneumoniae serotype 7 (strain AP76).